Here is a 333-residue protein sequence, read N- to C-terminus: CMP-N-acetylneuraminate-beta-galactosamide-alpha-2,3-sialyltransferase 4 (333 aa).

The Cytoplasmic portion of the chain corresponds to M1 to K8. A helical; Signal-anchor for type II membrane protein membrane pass occupies residues L9–S26. Residues R27–F333 are Lumenal-facing. N-linked (GlcNAc...) asparagine glycosylation is found at N61, N131, N310, and N329. The cysteines at positions 120 and 273 are disulfide-linked.

The protein belongs to the glycosyltransferase 29 family. As to expression, broadly expressed among tissues with highest levels in the small intestine and colon.

The protein localises to the golgi apparatus. The protein resides in the golgi stack membrane. It catalyses the reaction a beta-D-galactosyl-(1-&gt;3)-N-acetyl-beta-D-galactosaminyl derivative + CMP-N-acetyl-beta-neuraminate = an N-acetyl-alpha-neuraminyl-(2-&gt;3)-beta-D-galactosyl-(1-&gt;3)-N-acetyl-beta-D-galactosaminyl derivative + CMP + H(+). The enzyme catalyses a beta-D-galactosyl-(1-&gt;3)-N-acetyl-alpha-D-galactosaminyl derivative + CMP-N-acetyl-beta-neuraminate = an N-acetyl-alpha-neuraminyl-(2-&gt;3)-beta-D-galactosyl-(1-&gt;3)-N-acetyl-alpha-D-galactosaminyl derivative + CMP + H(+). The catalysed reaction is a beta-D-galactosyl-(1-&gt;4)-N-acetyl-beta-D-glucosaminyl derivative + CMP-N-acetyl-beta-neuraminate = an N-acetyl-alpha-neuraminyl-(2-&gt;3)-beta-D-galactosyl-(1-&gt;4)-N-acetyl-beta-D-glucosaminyl derivative + CMP + H(+). It carries out the reaction a ganglioside GM1 (d18:1(4E)) + CMP-N-acetyl-beta-neuraminate = a ganglioside GD1a (d18:1(4E)) + CMP + H(+). It catalyses the reaction a ganglioside GA1 (d18:1(4E)) + CMP-N-acetyl-beta-neuraminate = a ganglioside GM1b (d18:1(4E)) + CMP + H(+). The enzyme catalyses a ganglioside GT1c (d18:1(4E)) + CMP-N-acetyl-beta-neuraminate = a ganglioside GQ1c (d18:1(4E)) + CMP + H(+). The catalysed reaction is a neolactoside nLc4Cer + CMP-N-acetyl-beta-neuraminate = a neolactoside IV(3)-alpha-NeuAc-nLc4Cer + CMP + H(+). It carries out the reaction a neolactoside nLc4Cer(d18:1(4E)) + CMP-N-acetyl-beta-neuraminate = a neolactoside IV(3)-alpha-NeuAc-nLc4Cer(d18:1(4E)) + CMP + H(+). It participates in protein modification; protein glycosylation. In terms of biological role, a beta-galactoside alpha2-3 sialyltransferase involved in terminal sialylation of glycoproteins and glycolipids. Catalyzes the transfer of sialic acid (N-acetyl-neuraminic acid; Neu5Ac) from the nucleotide sugar donor CMP-Neu5Ac onto acceptor Galbeta-(1-&gt;3)-GalNAc- and Galbeta-(1-&gt;4)-GlcNAc-terminated glycoconjugates through an alpha2-3 linkage. Plays a major role in hemostasis. Responsible for sialylation of plasma VWF/von Willebrand factor, preventing its recognition by asialoglycoprotein receptors (ASGPR) and subsequent clearance. Regulates ASGPR-mediated clearance of platelets. Participates in the biosynthesis of the sialyl Lewis X epitopes, both on O- and N-glycans, which are recognized by SELE/E-selectin, SELP/P-selectin and SELL/L-selectin. Essential for selectin-mediated rolling and adhesion of leukocytes during extravasation. Contributes to adhesion and transendothelial migration of neutrophils likely through terminal sialylation of CXCR2. In glycosphingolipid biosynthesis, sialylates GM1 and GA1 gangliosides to form GD1a and GM1b, respectively. Metabolizes brain c-series ganglioside GT1c forming GQ1c. Synthesizes ganglioside LM1 (IV3Neu5Ac-nLc4Cer), a major structural component of peripheral nerve myelin. The polypeptide is CMP-N-acetylneuraminate-beta-galactosamide-alpha-2,3-sialyltransferase 4 (St3gal4) (Mus musculus (Mouse)).